The sequence spans 302 residues: Glutaminase (302 aa).

Positions 61, 111, 155, 162, 186, 238, and 256 each coordinate substrate.

It belongs to the glutaminase family. As to quaternary structure, homotetramer.

It catalyses the reaction L-glutamine + H2O = L-glutamate + NH4(+). This is Glutaminase from Pseudomonas fluorescens (strain Pf0-1).